The following is a 315-amino-acid chain: Prephenate dehydratase (315 aa).

Residues 3 to 189 enclose the Prephenate dehydratase domain; sequence RIAYLGPEGT…ARTRFVLVGP (187 aa). The 78-residue stretch at 203 to 280 folds into the ACT domain; it reads SVVLRIDNAP…ADVRYLGSWP (78 aa).

In terms of assembly, homodimer.

It catalyses the reaction prephenate + H(+) = 3-phenylpyruvate + CO2 + H2O. It functions in the pathway amino-acid biosynthesis; L-phenylalanine biosynthesis; phenylpyruvate from prephenate: step 1/1. The polypeptide is Prephenate dehydratase (pheA) (Mycobacterium avium (strain 104)).